Here is a 327-residue protein sequence, read N- to C-terminus: Probable protein phosphatase 2C 59 (327 aa).

The first 24 residues, 1-24 (MREVLLLGSLVVLALLSLFPCCSC), serve as a signal peptide directing secretion. Positions 64 to 310 (SYGYASSPGK…DNITCLVVRF (247 aa)) constitute a PPM-type phosphatase domain. Residues Asp100, Gly101, Asp262, and Asp301 each coordinate Mn(2+).

Belongs to the PP2C family. The cofactor is Mg(2+). It depends on Mn(2+) as a cofactor.

It carries out the reaction O-phospho-L-seryl-[protein] + H2O = L-seryl-[protein] + phosphate. The enzyme catalyses O-phospho-L-threonyl-[protein] + H2O = L-threonyl-[protein] + phosphate. The protein is Probable protein phosphatase 2C 59 of Oryza sativa subsp. japonica (Rice).